The sequence spans 288 residues: Xyloglucan endotransglucosylase protein 8 (288 aa).

The signal sequence occupies residues 1–25 (MAASPYSIFAVQLLLLASWMLSSSS). The 190-residue stretch at 26–215 (SNFNQDFNIA…WTQAPFTTSY (190 aa)) folds into the GH16 domain. The active-site Nucleophile is the Glu102. Glu106 acts as the Proton donor in catalysis. A xyloglucan-binding site is contributed by Glu106. A glycan (N-linked (GlcNAc...) asparagine) is linked at Asn110. Xyloglucan-binding positions include 119 to 121 (HTN), 129 to 131 (ERE), 194 to 195 (EW), and Gly199. Cystine bridges form between Cys224–Cys233 and Cys268–Cys282. Xyloglucan is bound at residue Arg273.

The protein belongs to the glycosyl hydrolase 16 family. XTH group 2 subfamily. In terms of processing, contains at least one intrachain disulfide bond essential for its enzymatic activity. As to expression, highly expressed in mature fruits. Very low expression in leaves, flowers, calyces and stems.

The protein localises to the secreted. The protein resides in the cell wall. It is found in the extracellular space. It localises to the apoplast. It carries out the reaction breaks a beta-(1-&gt;4) bond in the backbone of a xyloglucan and transfers the xyloglucanyl segment on to O-4 of the non-reducing terminal glucose residue of an acceptor, which can be a xyloglucan or an oligosaccharide of xyloglucan.. Catalyzes xyloglucan endotransglycosylation (XET). Cleaves and religates xyloglucan polymers. Does not catalyze xyloglucan endohydrolysis (XEH). Overexpression in Arabidopsis transgenic plants causes accelerated dark-induced leaf senescence and higher lipid peroxidation of the leaf cells. Overexpression in transgenic tomato plants promotes fruit ripening and softening. Probably involved in cell wall restructuring during postharvest fruit softening. This chain is Xyloglucan endotransglucosylase protein 8, found in Diospyros kaki (Kaki persimmon).